A 194-amino-acid polypeptide reads, in one-letter code: Flagellar transcriptional regulator FlhC (194 aa).

Zn(2+)-binding residues include Cys-139, Cys-142, Cys-159, and Cys-162.

This sequence belongs to the FlhC family. As to quaternary structure, heterohexamer composed of two FlhC and four FlhD subunits. Each FlhC binds a FlhD dimer, forming a heterotrimer, and a hexamer assembles by dimerization of two heterotrimers. The cofactor is Zn(2+).

It is found in the cytoplasm. In terms of biological role, functions in complex with FlhD as a master transcriptional regulator that regulates transcription of several flagellar and non-flagellar operons by binding to their promoter region. Activates expression of class 2 flagellar genes, including fliA, which is a flagellum-specific sigma factor that turns on the class 3 genes. Also regulates genes whose products function in a variety of physiological pathways. This chain is Flagellar transcriptional regulator FlhC, found in Xenorhabdus nematophila (Achromobacter nematophilus).